The sequence spans 1513 residues: Mucin-2 (1513 aa).

A signal peptide spans 1 to 20 (MGLPLARLVAVCLVLALAKG). The VWFD 1 domain occupies 32 to 204 (HVCSTWGDFH…KINKPEVVCE (173 aa)). 28 disulfide bridges follow: cysteine 34-cysteine 166, cysteine 56-cysteine 203, cysteine 64-cysteine 163, cysteine 215-cysteine 252, cysteine 222-cysteine 247, cysteine 234-cysteine 272, cysteine 254-cysteine 260, cysteine 262-cysteine 288, cysteine 292-cysteine 326, cysteine 309-cysteine 348, cysteine 328-cysteine 342, cysteine 350-cysteine 372, cysteine 367-cysteine 384, cysteine 370-cysteine 379, cysteine 388-cysteine 525, cysteine 410-cysteine 560, cysteine 432-cysteine 440, cysteine 571-cysteine 616, cysteine 585-cysteine 611, cysteine 598-cysteine 636, cysteine 618-cysteine 624, cysteine 626-cysteine 651, cysteine 658-cysteine 695, cysteine 671-cysteine 685, cysteine 675-cysteine 715, cysteine 697-cysteine 709, cysteine 717-cysteine 739, and cysteine 737-cysteine 746. Aspartate 46 provides a ligand contact to Ca(2+). Methionine 143 and methionine 151 together coordinate Cu(+). Glutamate 153 is a Cu(2+) binding site. Asparagine 160 is a glycosylation site (N-linked (GlcNAc...) asparagine). Residues aspartate 168, asparagine 170, and glutamate 177 each contribute to the Ca(2+) site. Cu(2+)-binding residues include histidine 274 and histidine 321. The 57-residue stretch at 292-348 (CPGNMVYLESGSPWLDTCSHLEVSSLCEEHYMDGCFCPEGTVYDDITGSGCIPVSQC) folds into the TIL domain. Residue methionine 323 coordinates Cu(+). Residues 350-410 (CKLHGHLYMP…GKKFTFHGDC (61 aa)) form the VWFC domain. The VWFD 2 domain maps to 386–561 (ETCALEGGSH…NTWKAQSSCH (176 aa)). Ca(2+) is bound at residue aspartate 400. An N-linked (GlcNAc...) asparagine glycan is attached at asparagine 420. Residues asparagine 527, asparagine 529, leucine 531, aspartate 534, and aspartate 535 each contribute to the Ca(2+) site. N-linked (GlcNAc...) asparagine glycosylation is present at asparagine 667. Asparagine 767 carries N-linked (GlcNAc...) asparagine glycosylation. 21 cysteine pairs are disulfide-bonded: cysteine 781-cysteine 817, cysteine 799-cysteine 811, cysteine 819-cysteine 842, cysteine 836-cysteine 854, cysteine 840-cysteine 849, cysteine 858-cysteine 989, cysteine 880-cysteine 1024, cysteine 889-cysteine 986, cysteine 906-cysteine 913, cysteine 1034-cysteine 1077, cysteine 1048-cysteine 1072, cysteine 1059-cysteine 1099, cysteine 1079-cysteine 1087, cysteine 1089-cysteine 1114, cysteine 1105-cysteine 1134, cysteine 1118-cysteine 1160, cysteine 1142-cysteine 1184, cysteine 1164-cysteine 1178, cysteine 1186-cysteine 1210, cysteine 1205-cysteine 1235, and cysteine 1208-cysteine 1218. Asparagine 837 carries an N-linked (GlcNAc...) asparagine glycan. Residues 856–1025 (STCSIYGSGH…NSWKEASTCP (170 aa)) enclose the VWFD 3 domain. Aspartate 870 contributes to the Ca(2+) binding site. The N-linked (GlcNAc...) asparagine glycan is linked to asparagine 892. Asparagine 991, aspartate 993, asparagine 998, and aspartate 999 together coordinate Ca(2+). N-linked (GlcNAc...) asparagine glycosylation is found at asparagine 1136 and asparagine 1151. Residues asparagine 1212, asparagine 1227, and asparagine 1243 are each glycosylated (N-linked (GlcNAc...) asparagine). 4 O-linked (GalNAc) threonine glycosylation sites follow: threonine 1264, threonine 1267, threonine 1268, and threonine 1280. Residue serine 1286 is glycosylated (O-linked (GalNAc) serine). The O-linked (GalNAc) threonine glycan is linked to threonine 1290. Ca(2+) is bound by residues asparagine 1303, histidine 1306, serine 1309, glycine 1313, aspartate 1314, and glutamate 1316. N-linked (GlcNAc...) asparagine glycosylation occurs at asparagine 1350. 2 residues coordinate Ca(2+): aspartate 1373 and tyrosine 1374. Repeat copies occupy residues 1392 to 1407 (SPTT…QPTS), 1408 to 1423 (SPTT…SSAT), 1424 to 1434 (SPTTSHITSTV), 1435 to 1445 (SPTTSPTTSTT), 1446 to 1456 (SPTTSPTTSTT), 1457 to 1467 (SPTTSTTSPTP), 1468 to 1478 (SPTTSTTSPTP), 1479 to 1489 (SPTTSTTSPTP), 1490 to 1500 (SPTTSTTSPTT), 1501 to 1511 (SPITSPTTSTT), and 1512 to 1513 (SP). Residues 1392-1513 (SPTTSTPISS…TSPTTSTTSP (122 aa)) are approximate repeats. Residues 1392–1513 (SPTTSTPISS…TSPTTSTTSP (122 aa)) form a disordered region.

In terms of assembly, homomultimer; disulfide-linked. The N- and C-terminus mediate their assembly into higher order structures to form filaments. The CTCK domains of two polypeptides associate in the endoplasmic reticulum to generate intermolecularly disulfide-bonded dimers. These dimers progress to the Golgi apparatus, which is a more acidic environment than the endoplasmic reticulum. Under acidic conditions, the N-termini form non-covalent intermolecular interactions that juxtapose assemblies of the third VWD domain (VWD3) from different CTCK-linked dimers. The VWD3 assemblies then become disulfide bonded to one another to produce long, disulfide-linked polymers that remain highly compact until secretion. Interacts with FCGBP. Interacts with AGR2; disulfide-linked. O-glycosylated. O-glycosylation is required for mucin assembly. Goblet cells synthesize two forms of mucin that differ in branched chain O-glycosylation and the site of production in the colon. Post-translationally, may undergo proteolytic cleavage in the outer mucus layer of the colon, contributing to the expanded volume and loose nature of this layer which allows for bacterial colonization in contrast to the inner mucus layer which is dense and devoid of bacteria. In terms of processing, at low pH of 6 and under, undergoes autocatalytic cleavage in vitro in the N-terminal region of the fourth VWD domain. It is likely that this also occurs in vivo and is triggered by the low pH of the late secretory pathway. As to expression, expressed in intestine and airway.

It is found in the secreted. In terms of biological role, coats the epithelia of the intestines and other mucus membrane-containing organs to provide a protective, lubricating barrier against particles and infectious agents at mucosal surfaces. Major constituent of the colon mucus, which is mainly formed by large polymeric networks of MUC2 secreted by goblet cells that cover the exposed surfaces of intestine. MUC2 networks form hydrogels that guard the underlying epithelium from pathogens and other hazardous matter entering from the outside world, while permitting nutrient absorption and gas exchange. Acts as a divalent copper chaperone that protects intestinal cells from copper toxicity and facilitates nutritional copper unptake into cells. Binds both Cu(2+) and its reduced form, Cu(1+), at two juxtaposed binding sites: Cu(2+), once reduced to Cu(1+) by vitamin C (ascorbate) or other dietary antioxidants, transits to the other binding site. MUC2-bound Cu(1+) is protected from oxidation in aerobic environments, and can be released for nutritional delivery to cells. Mucin gels store antimicrobial molecules that participate in innate immunity. Mucin glycoproteins also house and feed the microbiome, lubricate tissue surfaces, and may facilitate the removal of contaminants and waste products from the body. Goblet cells synthesize two forms of MUC2 mucin that differ in branched chain O-glycosylation and the site of production in the colon: a (1) 'thick' mucus that wraps the microbiota to form fecal pellets is produced in the proximal, ascending colon. 'Thick' mucus transits along the descending colon and is lubricated by a (2) 'thin' MUC2 mucus produced in the distal colon which adheres to the 'thick' mucus. The chain is Mucin-2 from Rattus norvegicus (Rat).